We begin with the raw amino-acid sequence, 105 residues long: Early E3A 12.1 kDa protein (105 aa).

The protein belongs to the adenoviridae E3A-2 family.

In terms of biological role, not yet known. In Human adenovirus A serotype 12 (HAdV-12), this protein is Early E3A 12.1 kDa protein.